We begin with the raw amino-acid sequence, 94 residues long: Small ribosomal subunit protein bS6 (94 aa).

It belongs to the bacterial ribosomal protein bS6 family.

In terms of biological role, binds together with bS18 to 16S ribosomal RNA. The polypeptide is Small ribosomal subunit protein bS6 (Clostridium botulinum (strain 657 / Type Ba4)).